The chain runs to 100 residues: Ribosomal processing cysteine protease Prp (100 aa).

The active-site Proton donor is His16. Catalysis depends on Cys28, which acts as the Nucleophile.

It belongs to the Prp family. In terms of assembly, homodimer.

Its function is as follows. An essential cysteine protease that cleaves the N-terminus from ribosomal protein bL27. The protein is Ribosomal processing cysteine protease Prp of Mycoplasma pneumoniae (strain ATCC 29342 / M129 / Subtype 1) (Mycoplasmoides pneumoniae).